Reading from the N-terminus, the 196-residue chain is Holliday junction branch migration complex subunit RuvA (196 aa).

A domain I region spans residues 1-63 (MIASVRGEVI…EDSMTLYGFA (63 aa)). Positions 64 to 142 (DADARDLFGT…PVTTGAGVTA (79 aa)) are domain II. The tract at residues 143–151 (VGGHAVRGP) is flexible linker. The segment at 151 to 196 (PVVEALVGLGFAAKQAEEACDKVLAADPDATTSSALRAALSMLGKK) is domain III.

Belongs to the RuvA family. As to quaternary structure, homotetramer. Forms an RuvA(8)-RuvB(12)-Holliday junction (HJ) complex. HJ DNA is sandwiched between 2 RuvA tetramers; dsDNA enters through RuvA and exits via RuvB. An RuvB hexamer assembles on each DNA strand where it exits the tetramer. Each RuvB hexamer is contacted by two RuvA subunits (via domain III) on 2 adjacent RuvB subunits; this complex drives branch migration. In the full resolvosome a probable DNA-RuvA(4)-RuvB(12)-RuvC(2) complex forms which resolves the HJ.

It is found in the cytoplasm. Functionally, the RuvA-RuvB-RuvC complex processes Holliday junction (HJ) DNA during genetic recombination and DNA repair, while the RuvA-RuvB complex plays an important role in the rescue of blocked DNA replication forks via replication fork reversal (RFR). RuvA specifically binds to HJ cruciform DNA, conferring on it an open structure. The RuvB hexamer acts as an ATP-dependent pump, pulling dsDNA into and through the RuvAB complex. HJ branch migration allows RuvC to scan DNA until it finds its consensus sequence, where it cleaves and resolves the cruciform DNA. The chain is Holliday junction branch migration complex subunit RuvA from Mycobacterium sp. (strain JLS).